The primary structure comprises 156 residues: Small ribosomal subunit protein uS7 (156 aa).

This sequence belongs to the universal ribosomal protein uS7 family. Part of the 30S ribosomal subunit. Contacts proteins S9 and S11.

Functionally, one of the primary rRNA binding proteins, it binds directly to 16S rRNA where it nucleates assembly of the head domain of the 30S subunit. Is located at the subunit interface close to the decoding center, probably blocks exit of the E-site tRNA. This Syntrophus aciditrophicus (strain SB) protein is Small ribosomal subunit protein uS7.